We begin with the raw amino-acid sequence, 429 residues long: Histidine--tRNA ligase (429 aa).

Belongs to the class-II aminoacyl-tRNA synthetase family. In terms of assembly, homodimer.

Its subcellular location is the cytoplasm. It catalyses the reaction tRNA(His) + L-histidine + ATP = L-histidyl-tRNA(His) + AMP + diphosphate + H(+). The polypeptide is Histidine--tRNA ligase (Pelodictyon phaeoclathratiforme (strain DSM 5477 / BU-1)).